We begin with the raw amino-acid sequence, 307 residues long: Pseudouridine-5'-phosphate glycosidase (307 aa).

Residue Glu28 is the Proton donor of the active site. The substrate site is built by Lys89 and Val109. Residue Asp141 participates in Mn(2+) binding. 143–145 serves as a coordination point for substrate; sequence SAD. The active-site Nucleophile is Lys162.

The protein belongs to the pseudouridine-5'-phosphate glycosidase family. As to quaternary structure, homotrimer. Requires Mn(2+) as cofactor.

It catalyses the reaction D-ribose 5-phosphate + uracil = psi-UMP + H2O. Its function is as follows. Catalyzes the reversible cleavage of pseudouridine 5'-phosphate (PsiMP) to ribose 5-phosphate and uracil. Functions biologically in the cleavage direction, as part of a pseudouridine degradation pathway. The polypeptide is Pseudouridine-5'-phosphate glycosidase (Alkaliphilus metalliredigens (strain QYMF)).